We begin with the raw amino-acid sequence, 295 residues long: Sulfotransferase 1A1 (295 aa).

Residue 48–53 (KSGTTW) coordinates 3'-phosphoadenylyl sulfate. 106-108 (KTH) contacts substrate. Residue His-108 is the Proton acceptor of the active site. Residues Arg-130, Ser-138, Tyr-193, 227–232 (TSFKEM), and 255–259 (FMRKG) each bind 3'-phosphoadenylyl sulfate. Residue Ser-138 is modified to Phosphoserine.

Belongs to the sulfotransferase 1 family. As to quaternary structure, homodimer. Liver, lung, adrenal, brain, platelets and skin.

The protein resides in the cytoplasm. The catalysed reaction is a phenol + 3'-phosphoadenylyl sulfate = an aryl sulfate + adenosine 3',5'-bisphosphate + H(+). The enzyme catalyses 17beta-estradiol + 3'-phosphoadenylyl sulfate = 17beta-estradiol 3-sulfate + adenosine 3',5'-bisphosphate + H(+). It catalyses the reaction 4-ethylphenol + 3'-phosphoadenylyl sulfate = 4-ethylphenyl sulfate + adenosine 3',5'-bisphosphate + H(+). It carries out the reaction 4-nitrophenol + 3'-phosphoadenylyl sulfate = 4-nitrophenyl sulfate + adenosine 3',5'-bisphosphate. The catalysed reaction is dopamine + 3'-phosphoadenylyl sulfate = dopamine 3-O-sulfate + adenosine 3',5'-bisphosphate + H(+). The enzyme catalyses dopamine + 3'-phosphoadenylyl sulfate = dopamine 4-O-sulfate + adenosine 3',5'-bisphosphate + H(+). It catalyses the reaction 3,3',5-triiodo-L-thyronine + 3'-phosphoadenylyl sulfate = 3,3',5-triiodo-L-thyronine sulfate + adenosine 3',5'-bisphosphate + H(+). It carries out the reaction 3,3',5'-triiodo-L-thyronine + 3'-phosphoadenylyl sulfate = 3,3',5'-triiodo-L-thyronine sulfate + adenosine 3',5'-bisphosphate + H(+). The catalysed reaction is 3,3'-diiodo-L-thyronine + 3'-phosphoadenylyl sulfate = 3,3'-diiodo-L-thyronine sulfate + adenosine 3',5'-bisphosphate + H(+). The enzyme catalyses L-thyroxine + 3'-phosphoadenylyl sulfate = L-thyroxine sulfate + adenosine 3',5'-bisphosphate + H(+). Its function is as follows. Sulfotransferase that utilizes 3'-phospho-5'-adenylyl sulfate (PAPS) as sulfonate donor to catalyze the sulfate conjugation of a wide variety of acceptor molecules bearing a hydroxyl or an amine group. Sulfonation increases the water solubility of most compounds, and therefore their renal excretion, but it can also result in bioactivation to form active metabolites. Displays broad substrate specificity for small phenolic compounds. Plays an important role in the sulfonation of endogenous molecules such as steroid hormones. Mediates the sulfate conjugation of a variety of xenobiotics, including the drugs acetaminophen and minoxidil. Mediates also the metabolic activation of carcinogenic N-hydroxyarylamines leading to highly reactive intermediates capable of forming DNA adducts, potentially resulting in mutagenesis. May play a role in gut microbiota-host metabolic interaction. O-sulfonates 4-ethylphenol (4-EP), a dietary tyrosine-derived metabolite produced by gut bacteria. The product 4-EPS crosses the blood-brain barrier and may negatively regulate oligodendrocyte maturation and myelination, affecting the functional connectivity of different brain regions associated with the limbic system. Catalyzes the sulfate conjugation of dopamine. Catalyzes the sulfation of T4 (L-thyroxine/3,5,3',5'-tetraiodothyronine), T3 (3,5,3'-triiodothyronine), rT3 (3,3',5'-triiodothyronine) and 3,3'-T2 (3,3'-diiodothyronine), with a substrate preference of 3,3'-T2 &gt; rT3 &gt; T3 &gt; T4. The polypeptide is Sulfotransferase 1A1 (SULT1A1) (Homo sapiens (Human)).